Here is a 232-residue protein sequence, read N- to C-terminus: 5'-methylthioadenosine/S-adenosylhomocysteine nucleosidase (232 aa).

Residue Glu12 is the Proton acceptor of the active site. Residues Gly78, Ile152, and 173 to 174 (ME) contribute to the substrate site. Asp197 acts as the Proton donor in catalysis.

It belongs to the PNP/UDP phosphorylase family. MtnN subfamily. Homodimer.

The enzyme catalyses S-adenosyl-L-homocysteine + H2O = S-(5-deoxy-D-ribos-5-yl)-L-homocysteine + adenine. The catalysed reaction is S-methyl-5'-thioadenosine + H2O = 5-(methylsulfanyl)-D-ribose + adenine. It catalyses the reaction 5'-deoxyadenosine + H2O = 5-deoxy-D-ribose + adenine. It participates in amino-acid biosynthesis; L-methionine biosynthesis via salvage pathway; S-methyl-5-thio-alpha-D-ribose 1-phosphate from S-methyl-5'-thioadenosine (hydrolase route): step 1/2. Functionally, catalyzes the irreversible cleavage of the glycosidic bond in both 5'-methylthioadenosine (MTA) and S-adenosylhomocysteine (SAH/AdoHcy) to adenine and the corresponding thioribose, 5'-methylthioribose and S-ribosylhomocysteine, respectively. Also cleaves 5'-deoxyadenosine, a toxic by-product of radical S-adenosylmethionine (SAM) enzymes, into 5-deoxyribose and adenine. Thus, is required for in vivo function of the radical SAM enzymes biotin synthase and lipoic acid synthase, that are inhibited by 5'-deoxyadenosine accumulation. The sequence is that of 5'-methylthioadenosine/S-adenosylhomocysteine nucleosidase from Salmonella paratyphi A (strain ATCC 9150 / SARB42).